A 181-amino-acid chain; its full sequence is Adenine phosphoribosyltransferase (181 aa).

This sequence belongs to the purine/pyrimidine phosphoribosyltransferase family. Homodimer.

Its subcellular location is the cytoplasm. It carries out the reaction AMP + diphosphate = 5-phospho-alpha-D-ribose 1-diphosphate + adenine. Its pathway is purine metabolism; AMP biosynthesis via salvage pathway; AMP from adenine: step 1/1. Catalyzes a salvage reaction resulting in the formation of AMP, that is energically less costly than de novo synthesis. This Neorhizobium galegae (Rhizobium galegae) protein is Adenine phosphoribosyltransferase.